The chain runs to 433 residues: Tol-Pal system protein TolB (433 aa).

Positions 1–21 (MRNLLRGMLVVICCMAGIVMA) are cleaved as a signal peptide.

The protein belongs to the TolB family. The Tol-Pal system is composed of five core proteins: the inner membrane proteins TolA, TolQ and TolR, the periplasmic protein TolB and the outer membrane protein Pal. They form a network linking the inner and outer membranes and the peptidoglycan layer.

The protein resides in the periplasm. Its function is as follows. Part of the Tol-Pal system, which plays a role in outer membrane invagination during cell division and is important for maintaining outer membrane integrity. This Pseudomonas fluorescens (strain Pf0-1) protein is Tol-Pal system protein TolB.